The chain runs to 155 residues: Large ribosomal subunit protein bL17 (155 aa).

The protein belongs to the bacterial ribosomal protein bL17 family. In terms of assembly, part of the 50S ribosomal subunit. Contacts protein L32.

The protein is Large ribosomal subunit protein bL17 of Bifidobacterium adolescentis (strain ATCC 15703 / DSM 20083 / NCTC 11814 / E194a).